The following is a 522-amino-acid chain: Cytochrome P450 9c1 (522 aa).

Cys-464 lines the heme pocket.

It belongs to the cytochrome P450 family. Requires heme as cofactor.

It is found in the endoplasmic reticulum membrane. The protein resides in the microsome membrane. In terms of biological role, may be involved in the metabolism of insect hormones and in the breakdown of synthetic insecticides. The sequence is that of Cytochrome P450 9c1 (Cyp9c1) from Drosophila melanogaster (Fruit fly).